A 602-amino-acid polypeptide reads, in one-letter code: Leucine-rich repeat-containing protein 40 (602 aa).

Residues 1–20 (MSRLKRIAGQDPRAGFKAAG) are disordered. A Phosphoserine modification is found at Ser-71. 20 LRR repeats span residues 83–104 (DLTK…LRLL), 106–127 (ALTV…MREL), 129–150 (NLQK…ITNL), 152–173 (NLKC…FEQL), 175–196 (NLED…FSSL), 198–219 (SLVR…INRM), 221–242 (RLKH…LAGM), 244–265 (SLEL…PSCS), 266–286 (LLKE…EHLK), 290–311 (SILV…IILL), 313–335 (SLER…GNLH), 336–356 (LKFL…IINK), 400–421 (TLKI…VFNA), 426–447 (IITS…MVEL), 450–471 (MVSD…LCML), 473–494 (KLTF…MESL), 496–517 (RLQT…LYRI), 519–540 (TLET…KMKM), 543–564 (NLTT…LGNC), and 566–586 (NLRT…AILI).

This chain is Leucine-rich repeat-containing protein 40 (LRRC40), found in Macaca fascicularis (Crab-eating macaque).